Reading from the N-terminus, the 631-residue chain is MGSHESLGPYFLVFLLLLLLPPPLFRAGSLRYHGPDWRIFHRLALGSRRAHHHHGPGWRQHWRQGQAGHRCQGSFDLYFILDKSGSVNNNWIDLYMWVEETVARFQSPNIRMCFITYSTDGQTVLPLTSDKNRIKNGLDQLQKIVPDGHTFMQAGFRKAIQQIESFNSGNKVPSMIIAMTDGELVAHAFQDTLREAQKARKLGANVYTLGVADYNLDQITAIADSPGHVFAVENGFKALRSTIDALTSKVCLDVTSVEPSSECVGEPYHVVIHGNGFQNLKKRDEVICRFIFNESTIIDEKPTSIDNNSMNCPGPKLEKPGEEYSIEVSLNKGKTFFKSNVSITSTTCGIFRNWLYFVPLLLLVPLLLCCVWRLCRKQTVKEPPPVQKPEKEPEQEKPPSPPPPPPPPPPPLPPPPPAPVNTCPTVIICCCGCQGVGGMRRIEGNLDTFCDLSHASCHQVPWMCCQSRDQGRYLSLALAQSQYAQAPCCPRICFPHSQECLSLPQAPCSPRMCLRHSRECLALKQARCSPNICLRHSQHSRECLARKQAPCSPRICLRHSPEYFSQAQTLCNPKSCLQPSRECLPLTCSSRCRLPPARCLRPPSRMLPLLSPLLRHTAEPPLSLPPSEPNF.

The signal sequence occupies residues 1-27 (MGSHESLGPYFLVFLLLLLLPPPLFRA). The Extracellular segment spans residues 28–353 (GSLRYHGPDW…TSTTCGIFRN (326 aa)). One can recognise a VWFA domain in the interval 76-246 (DLYFILDKSG…KALRSTIDAL (171 aa)). Ser84, Ser86, and Thr150 together coordinate a divalent metal cation. The helical transmembrane segment at 354-374 (WLYFVPLLLLVPLLLCCVWRL) threads the bilayer. Topologically, residues 375–631 (CRKQTVKEPP…LSLPPSEPNF (257 aa)) are cytoplasmic. The interval 382-413 (EPPPVQKPEKEPEQEKPPSPPPPPPPPPPPLP) is disordered. Residues 388–397 (KPEKEPEQEK) are compositionally biased toward basic and acidic residues. Over residues 398–413 (PPSPPPPPPPPPPPLP) the composition is skewed to pro residues.

It belongs to the ATR family.

It is found in the membrane. This Homo sapiens (Human) protein is Anthrax toxin receptor-like (ANTXRL).